Here is a 371-residue protein sequence, read N- to C-terminus: GTPase Obg (371 aa).

In terms of domain architecture, Obg spans 1 to 159 (MKFLDQAKVY…KTIWLRLKLI (159 aa)). In terms of domain architecture, OBG-type G spans 160–327 (ADAGLVGLPN…VLRALRDIIV (168 aa)). GTP contacts are provided by residues 166–173 (GLPNAGKS), 191–195 (FTTLH), 212–215 (DIPG), 279–282 (SQID), and 308–310 (SAI). Serine 173 and threonine 193 together coordinate Mg(2+). The tract at residues 337–371 (APMKALKVRHRDMQSSGNEGESEDNSDRDDEEQQG) is disordered. Acidic residues predominate over residues 356–371 (GESEDNSDRDDEEQQG).

Belongs to the TRAFAC class OBG-HflX-like GTPase superfamily. OBG GTPase family. In terms of assembly, monomer. The cofactor is Mg(2+).

The protein resides in the cytoplasm. An essential GTPase which binds GTP, GDP and possibly (p)ppGpp with moderate affinity, with high nucleotide exchange rates and a fairly low GTP hydrolysis rate. Plays a role in control of the cell cycle, stress response, ribosome biogenesis and in those bacteria that undergo differentiation, in morphogenesis control. This Rhizobium rhizogenes (strain K84 / ATCC BAA-868) (Agrobacterium radiobacter) protein is GTPase Obg.